We begin with the raw amino-acid sequence, 357 residues long: Dual-specificity RNA methyltransferase RlmN (357 aa).

Residue Glu-89 is the Proton acceptor of the active site. The Radical SAM core domain maps to 109 to 340 (EREKYTVCVS…CTIRESKALD (232 aa)). Cys-116 and Cys-345 form a disulfide bridge. Cys-123, Cys-127, and Cys-130 together coordinate [4Fe-4S] cluster. S-adenosyl-L-methionine is bound by residues 173–174 (GE), Ser-203, 226–228 (SLH), and Asn-302. Cys-345 acts as the S-methylcysteine intermediate in catalysis.

This sequence belongs to the radical SAM superfamily. RlmN family. It depends on [4Fe-4S] cluster as a cofactor.

Its subcellular location is the cytoplasm. It carries out the reaction adenosine(2503) in 23S rRNA + 2 reduced [2Fe-2S]-[ferredoxin] + 2 S-adenosyl-L-methionine = 2-methyladenosine(2503) in 23S rRNA + 5'-deoxyadenosine + L-methionine + 2 oxidized [2Fe-2S]-[ferredoxin] + S-adenosyl-L-homocysteine. The enzyme catalyses adenosine(37) in tRNA + 2 reduced [2Fe-2S]-[ferredoxin] + 2 S-adenosyl-L-methionine = 2-methyladenosine(37) in tRNA + 5'-deoxyadenosine + L-methionine + 2 oxidized [2Fe-2S]-[ferredoxin] + S-adenosyl-L-homocysteine. Functionally, specifically methylates position 2 of adenine 2503 in 23S rRNA and position 2 of adenine 37 in tRNAs. m2A2503 modification seems to play a crucial role in the proofreading step occurring at the peptidyl transferase center and thus would serve to optimize ribosomal fidelity. The chain is Dual-specificity RNA methyltransferase RlmN from Helicobacter pylori (strain ATCC 700392 / 26695) (Campylobacter pylori).